The primary structure comprises 288 residues: Homoserine kinase (288 aa).

78–88 contacts ATP; that stretch reads PLARGLGSSSS.

This sequence belongs to the GHMP kinase family. Homoserine kinase subfamily.

The protein localises to the cytoplasm. The enzyme catalyses L-homoserine + ATP = O-phospho-L-homoserine + ADP + H(+). The protein operates within amino-acid biosynthesis; L-threonine biosynthesis; L-threonine from L-aspartate: step 4/5. Catalyzes the ATP-dependent phosphorylation of L-homoserine to L-homoserine phosphate. The sequence is that of Homoserine kinase from Streptococcus agalactiae serotype III (strain NEM316).